The sequence spans 177 residues: ATP synthase subunit delta (177 aa).

This sequence belongs to the ATPase delta chain family. As to quaternary structure, F-type ATPases have 2 components, F(1) - the catalytic core - and F(0) - the membrane proton channel. F(1) has five subunits: alpha(3), beta(3), gamma(1), delta(1), epsilon(1). F(0) has three main subunits: a(1), b(2) and c(10-14). The alpha and beta chains form an alternating ring which encloses part of the gamma chain. F(1) is attached to F(0) by a central stalk formed by the gamma and epsilon chains, while a peripheral stalk is formed by the delta and b chains.

It is found in the cell inner membrane. Its function is as follows. F(1)F(0) ATP synthase produces ATP from ADP in the presence of a proton or sodium gradient. F-type ATPases consist of two structural domains, F(1) containing the extramembraneous catalytic core and F(0) containing the membrane proton channel, linked together by a central stalk and a peripheral stalk. During catalysis, ATP synthesis in the catalytic domain of F(1) is coupled via a rotary mechanism of the central stalk subunits to proton translocation. This protein is part of the stalk that links CF(0) to CF(1). It either transmits conformational changes from CF(0) to CF(1) or is implicated in proton conduction. This is ATP synthase subunit delta from Vibrio parahaemolyticus serotype O3:K6 (strain RIMD 2210633).